Here is a 402-residue protein sequence, read N- to C-terminus: D-galactonate dehydratase family member RspA (402 aa).

Substrate-binding residues include asparagine 37 and histidine 122. The active-site Proton donor/acceptor is the tyrosine 159. A Mg(2+)-binding site is contributed by aspartate 210. Histidine 212 acts as the Proton donor/acceptor in catalysis. Positions 236 and 262 each coordinate Mg(2+). Residues glutamate 262, arginine 283, histidine 312, aspartate 316, and glutamate 339 each coordinate substrate.

This sequence belongs to the mandelate racemase/muconate lactonizing enzyme family. GalD subfamily. Requires Mg(2+) as cofactor.

The enzyme catalyses D-mannonate = 2-dehydro-3-deoxy-D-gluconate + H2O. Functionally, has low D-mannonate dehydratase activity (in vitro), suggesting that this is not a physiological substrate and that it has no significant role in D-mannonate degradation in vivo. Has no detectable activity with a panel of 70 other acid sugars (in vitro). This is D-galactonate dehydratase family member RspA (rspA) from Cellvibrio japonicus (strain Ueda107) (Pseudomonas fluorescens subsp. cellulosa).